Consider the following 359-residue polypeptide: 3-dehydroquinate synthase (359 aa).

Residues 106-110, 130-131, K143, and K152 contribute to the NAD(+) site; these read GVVGD and TS. Residues E185, H246, and H263 each coordinate Zn(2+).

The protein belongs to the sugar phosphate cyclases superfamily. Dehydroquinate synthase family. Co(2+) serves as cofactor. Requires Zn(2+) as cofactor. NAD(+) is required as a cofactor.

The protein localises to the cytoplasm. The enzyme catalyses 7-phospho-2-dehydro-3-deoxy-D-arabino-heptonate = 3-dehydroquinate + phosphate. The protein operates within metabolic intermediate biosynthesis; chorismate biosynthesis; chorismate from D-erythrose 4-phosphate and phosphoenolpyruvate: step 2/7. In terms of biological role, catalyzes the conversion of 3-deoxy-D-arabino-heptulosonate 7-phosphate (DAHP) to dehydroquinate (DHQ). The protein is 3-dehydroquinate synthase of Clostridium kluyveri (strain ATCC 8527 / DSM 555 / NBRC 12016 / NCIMB 10680 / K1).